The chain runs to 64 residues: Small ribosomal subunit protein eS17 (64 aa).

It belongs to the eukaryotic ribosomal protein eS17 family.

The polypeptide is Small ribosomal subunit protein eS17 (Methanosarcina barkeri (strain Fusaro / DSM 804)).